The following is a 76-amino-acid chain: Adropin (76 aa).

The first 33 residues, 1–33 (MGAAISQGALIAIVCNGLVGFLLLLLWVILCWA), serve as a signal peptide directing secretion. Residues 41-76 (VDSLSESSPNSSPGPCPEKAPPPQKPSHEGSYLLQP) are disordered. Positions 52-65 (SPGPCPEKAPPPQK) are enriched in pro residues.

In terms of tissue distribution, expressed in liver and brain.

The protein resides in the secreted. Functionally, involved in the regulation of glucose homeostasis and lipid metabolism. In Homo sapiens (Human), this protein is Adropin (ENHO).